Here is a 120-residue protein sequence, read N- to C-terminus: Chaperonin GroEL (120 aa).

23–27 (DGTTT) provides a ligand contact to ATP.

It belongs to the chaperonin (HSP60) family. Forms a cylinder of 14 subunits composed of two heptameric rings stacked back-to-back. Interacts with the co-chaperonin GroES.

The protein resides in the cytoplasm. The catalysed reaction is ATP + H2O + a folded polypeptide = ADP + phosphate + an unfolded polypeptide.. In terms of biological role, together with its co-chaperonin GroES, plays an essential role in assisting protein folding. The GroEL-GroES system forms a nano-cage that allows encapsulation of the non-native substrate proteins and provides a physical environment optimized to promote and accelerate protein folding. The chain is Chaperonin GroEL from Mycolicibacterium chitae (Mycobacterium chitae).